The sequence spans 228 residues: Phosphoribosylformylglycinamidine synthase subunit PurQ (228 aa).

The Glutamine amidotransferase type-1 domain occupies 3 to 226 (FAVIVFPGSN…IANWRDSYAI (224 aa)). Cysteine 87 serves as the catalytic Nucleophile. Residues histidine 195 and glutamate 197 contribute to the active site.

Part of the FGAM synthase complex composed of 1 PurL, 1 PurQ and 2 PurS subunits.

Its subcellular location is the cytoplasm. The catalysed reaction is N(2)-formyl-N(1)-(5-phospho-beta-D-ribosyl)glycinamide + L-glutamine + ATP + H2O = 2-formamido-N(1)-(5-O-phospho-beta-D-ribosyl)acetamidine + L-glutamate + ADP + phosphate + H(+). It catalyses the reaction L-glutamine + H2O = L-glutamate + NH4(+). Its pathway is purine metabolism; IMP biosynthesis via de novo pathway; 5-amino-1-(5-phospho-D-ribosyl)imidazole from N(2)-formyl-N(1)-(5-phospho-D-ribosyl)glycinamide: step 1/2. Its function is as follows. Part of the phosphoribosylformylglycinamidine synthase complex involved in the purines biosynthetic pathway. Catalyzes the ATP-dependent conversion of formylglycinamide ribonucleotide (FGAR) and glutamine to yield formylglycinamidine ribonucleotide (FGAM) and glutamate. The FGAM synthase complex is composed of three subunits. PurQ produces an ammonia molecule by converting glutamine to glutamate. PurL transfers the ammonia molecule to FGAR to form FGAM in an ATP-dependent manner. PurS interacts with PurQ and PurL and is thought to assist in the transfer of the ammonia molecule from PurQ to PurL. The protein is Phosphoribosylformylglycinamidine synthase subunit PurQ of Oceanobacillus iheyensis (strain DSM 14371 / CIP 107618 / JCM 11309 / KCTC 3954 / HTE831).